The sequence spans 127 residues: Fluoride-specific ion channel FluC (127 aa).

4 helical membrane-spanning segments follow: residues 4 to 24, 36 to 56, 68 to 88, and 98 to 118; these read PILA…GLGL, GTLV…AFFA, LVIT…AEIV, and WAMS…LAGI. Na(+) is bound by residues Gly75 and Ser78.

It belongs to the fluoride channel Fluc/FEX (TC 1.A.43) family.

The protein localises to the cell inner membrane. It catalyses the reaction fluoride(in) = fluoride(out). Na(+) is not transported, but it plays an essential structural role and its presence is essential for fluoride channel function. Functionally, fluoride-specific ion channel. Important for reducing fluoride concentration in the cell, thus reducing its toxicity. The polypeptide is Fluoride-specific ion channel FluC (Nitrosomonas europaea (strain ATCC 19718 / CIP 103999 / KCTC 2705 / NBRC 14298)).